Here is a 147-residue protein sequence, read N- to C-terminus: MKKNVAVDEALKEILNKEGASTQEEICEKLSSLGIAMTQSSVSRWLRKVHAIKIPGEKGARYSLPTSIDESSVKGLVFSVRYNSSLIVIRTAPGSASWIASLIDNKFSESILGTLAGDDTIFVTPIAESTISFIAKDIENFLLVFSD.

This sequence belongs to the ArgR family.

The protein resides in the cytoplasm. It participates in amino-acid biosynthesis; L-arginine biosynthesis [regulation]. In terms of biological role, regulates arginine biosynthesis genes. The sequence is that of Arginine repressor from Chlamydia felis (strain Fe/C-56) (Chlamydophila felis).